A 73-amino-acid chain; its full sequence is Sec-independent protein translocase protein TatA (73 aa).

A helical transmembrane segment spans residues 1–21 (MFGLGAPELILILILALIIFG). The tract at residues 52–73 (EAAKIDDGNNNSDKEKATRQAS) is disordered.

It belongs to the TatA/E family. As to quaternary structure, forms a complex with TatC.

The protein localises to the cell membrane. Part of the twin-arginine translocation (Tat) system that transports large folded proteins containing a characteristic twin-arginine motif in their signal peptide across membranes. TatA could form the protein-conducting channel of the Tat system. The chain is Sec-independent protein translocase protein TatA from Moorella thermoacetica (strain ATCC 39073 / JCM 9320).